The primary structure comprises 309 residues: SUR7 family protein FMP45 (309 aa).

Over 1 to 5 (MIFKR) the chain is Cytoplasmic. A helical transmembrane segment spans residues 6-26 (FVNLLVFLFLLGAGLLTFFLI). At 27–116 (LSGGRESGTL…YYLSRVGWAM (90 aa)) the chain is on the extracellular side. An N-linked (GlcNAc...) asparagine glycan is attached at N73. Residues 117–137 (LLISLFFIVLALVPGFLATFL) form a helical membrane-spanning segment. Over 138–140 (PFK) the chain is Cytoplasmic. The helical transmembrane segment at 141 to 161 (AVPVLYCVLSWLAFFFIILAA) threads the bilayer. Topologically, residues 162-188 (CLYTGCYVKARKTFRNSGRSARLGPKN) are extracellular. Residues 189-209 (FAFIWTSVFLMLVNAIWSTIF) traverse the membrane as a helical segment. At 210 to 309 (SATHKAHSTY…GLAGPVTVRD (100 aa)) the chain is on the cytoplasmic side. S230 and S232 each carry phosphoserine. T235 bears the Phosphothreonine mark. Positions 253-309 (GPITAAPVVGQPQPTTTTTPAGNGKFFQKLKTRKQVPSAELEPAGDGGLAGPVTVRD) are disordered. Residues 258–274 (APVVGQPQPTTTTTPAG) show a composition bias toward low complexity.

Belongs to the SUR7 family.

It localises to the cell membrane. Functionally, involved in sporulation and affects the sphingolipid composition of the plasma membrane. This is SUR7 family protein FMP45 (FMP45) from Saccharomyces cerevisiae (strain ATCC 204508 / S288c) (Baker's yeast).